The following is a 425-amino-acid chain: Serine--tRNA ligase (425 aa).

L-serine is bound at residue 230–232 (TAE). Residue 261-263 (RSE) coordinates ATP. Residue glutamate 284 coordinates L-serine. Residue 348–351 (EISS) participates in ATP binding. Residue serine 384 participates in L-serine binding.

This sequence belongs to the class-II aminoacyl-tRNA synthetase family. Type-1 seryl-tRNA synthetase subfamily. In terms of assembly, homodimer. The tRNA molecule binds across the dimer.

Its subcellular location is the cytoplasm. It carries out the reaction tRNA(Ser) + L-serine + ATP = L-seryl-tRNA(Ser) + AMP + diphosphate + H(+). It catalyses the reaction tRNA(Sec) + L-serine + ATP = L-seryl-tRNA(Sec) + AMP + diphosphate + H(+). It functions in the pathway aminoacyl-tRNA biosynthesis; selenocysteinyl-tRNA(Sec) biosynthesis; L-seryl-tRNA(Sec) from L-serine and tRNA(Sec): step 1/1. Catalyzes the attachment of serine to tRNA(Ser). Is also able to aminoacylate tRNA(Sec) with serine, to form the misacylated tRNA L-seryl-tRNA(Sec), which will be further converted into selenocysteinyl-tRNA(Sec). This chain is Serine--tRNA ligase, found in Streptococcus pyogenes serotype M1.